A 315-amino-acid polypeptide reads, in one-letter code: Ribosomal RNA small subunit methyltransferase H (315 aa).

S-adenosyl-L-methionine is bound by residues 37–39 (GGH), aspartate 57, phenylalanine 83, aspartate 105, and glutamine 112. The interval 296-315 (EVKANPRSRSAVMRVAEKVR) is disordered.

Belongs to the methyltransferase superfamily. RsmH family.

The protein localises to the cytoplasm. The catalysed reaction is cytidine(1402) in 16S rRNA + S-adenosyl-L-methionine = N(4)-methylcytidine(1402) in 16S rRNA + S-adenosyl-L-homocysteine + H(+). Functionally, specifically methylates the N4 position of cytidine in position 1402 (C1402) of 16S rRNA. The chain is Ribosomal RNA small subunit methyltransferase H from Stutzerimonas stutzeri (strain A1501) (Pseudomonas stutzeri).